We begin with the raw amino-acid sequence, 807 residues long: Leucine--tRNA ligase (807 aa).

The short motif at 40–51 is the 'HIGH' region element; that stretch reads PYPSGQGLHVGH. The 'KMSKS' region signature appears at 575–579; the sequence is KMSKS. ATP is bound at residue Lys578.

The protein belongs to the class-I aminoacyl-tRNA synthetase family.

Its subcellular location is the cytoplasm. The enzyme catalyses tRNA(Leu) + L-leucine + ATP = L-leucyl-tRNA(Leu) + AMP + diphosphate. This Latilactobacillus sakei subsp. sakei (strain 23K) (Lactobacillus sakei subsp. sakei) protein is Leucine--tRNA ligase.